Reading from the N-terminus, the 85-residue chain is Homeobox protein knotted-1-like 7 (85 aa).

The region spanning 1-21 is the ELK domain; sequence ELKNELKQGYKEKLVDIREEI. Residues 22 to 85 constitute a DNA-binding region (homeobox; TALE-type); that stretch reads MRKRRAGKLP…NQRKRNWHSN (64 aa).

The protein belongs to the TALE/KNOX homeobox family. Expressed in all tissues examined. Highest expression in leaves.

It is found in the nucleus. This Zea mays (Maize) protein is Homeobox protein knotted-1-like 7 (KNOX7).